A 405-amino-acid chain; its full sequence is L-rhamnonate dehydratase (405 aa).

Substrate contacts are provided by His-33 and Arg-59. Residues Asp-226, Glu-252, and Glu-280 each coordinate Mg(2+). His-329 acts as the Proton acceptor in catalysis. Position 349 (Glu-349) interacts with substrate.

This sequence belongs to the mandelate racemase/muconate lactonizing enzyme family. RhamD subfamily. In terms of assembly, homooctamer; tetramer of dimers. Requires Mg(2+) as cofactor.

The enzyme catalyses L-rhamnonate = 2-dehydro-3-deoxy-L-rhamnonate + H2O. Functionally, catalyzes the dehydration of L-rhamnonate to 2-keto-3-deoxy-L-rhamnonate (KDR). In Escherichia coli O6:K15:H31 (strain 536 / UPEC), this protein is L-rhamnonate dehydratase.